A 620-amino-acid polypeptide reads, in one-letter code: Rpb7-binding protein seb1 (620 aa).

The CID domain maps to Met-1–Met-151. Disordered stretches follow at residues Met-151 to Glu-191 and Ser-327 to Pro-398. Position 343 is a phosphoserine (Ser-343). Residues Pro-361–Pro-374 are compositionally biased toward low complexity. Residues Arg-406–Gly-478 enclose the RRM domain. Positions Arg-558–Gln-620 are disordered. A compositionally biased stretch (basic and acidic residues) spans His-570–Asn-580.

As to quaternary structure, interacts with rpb7.

The protein resides in the nucleus. Functionally, involved in the processing of pol II transcripts. The protein is Rpb7-binding protein seb1 (seb1) of Schizosaccharomyces pombe (strain 972 / ATCC 24843) (Fission yeast).